Here is a 115-residue protein sequence, read N- to C-terminus: Tyrosine-protein phosphatase 23 (115 aa).

One can recognise a Tyrosine-protein phosphatase domain in the interval 1–115 (WMMIVEQKCR…EIGGDAPMVV (115 aa)). Aspartate 83 is a binding site for substrate.

Belongs to the protein-tyrosine phosphatase family.

It catalyses the reaction O-phospho-L-tyrosyl-[protein] + H2O = L-tyrosyl-[protein] + phosphate. This is Tyrosine-protein phosphatase 23 (STY-23) from Styela plicata (Wrinkled sea squirt).